We begin with the raw amino-acid sequence, 622 residues long: uncharacterized protein (622 aa).

Residues 157-166 (LKESPLRDQQ) are compositionally biased toward basic and acidic residues. The interval 157–238 (LKESPLRDQQ…GLPDHNSISE (82 aa)) is disordered.

This is an uncharacterized protein from Homo sapiens (Human).